The primary structure comprises 1068 residues: Rho family-interacting cell polarization regulator 2 (1068 aa).

A phosphoserine; in isoform mark is found at S21 and S37. The disordered stretch occupies residues 45–73 (LKKPQAKLKKMHNLGHKNNNPPKEPQPKR). A compositionally biased stretch (basic residues) spans 48 to 59 (PQAKLKKMHNLG). The interval 55-113 (MHNLGHKNNNPPKEPQPKRVEEVYRALKNGLDEYLEVHQTELDKLTAQLKDMKRNSRLG) is involved in cell filopodia formation. Positions 83-112 (NGLDEYLEVHQTELDKLTAQLKDMKRNSRL) form a coiled coil. Phosphoserine; in isoform 2 is present on S341. Residues 474–491 (QNEGMDDTSSASSRNSLG) are compositionally biased toward polar residues. The interval 474-524 (QNEGMDDTSSASSRNSLGEGQEPKSHLKEEDPEEPRKPASAPSEACRRQSS) is disordered. The span at 494–510 (QEPKSHLKEEDPEEPRK) shows a compositional bias: basic and acidic residues. A Phosphoserine; in isoform 2 modification is found at S523. Residue S573 is modified to Phosphoserine. At S585 the chain carries Phosphoserine; in isoform 2. Positions 768-793 (VARSLLEKLSRQIQVMEKLAAVSDEN) form a coiled coil.

This sequence belongs to the RIPOR family. In terms of assembly, homooligomer; homooligomerization is regulated by RHOC and leads to the formation of concatemers through the association of N- and C-termini. Interacts with 14-3-3 proteins; these interactions occur during myogenic cell differentiation. Interacts with HDAC6; this interaction occurs during early myogenic differentiation and prevents HDAC6 to deacetylate tubulin. Interacts with DYSF; this interaction occurs during early myogenic differentiation. Interacts with MYOF. Interacts with RHOC. Isoform 1 and isoform 2 interact (via active GTP- or inactive GDP-bound forms) with RHOA; these interactions are direct, block the loading of GTP to RHOA and decrease upon chemokine CCL19 stimulation in primary T lymphocytes. Isoform 2 interacts (phosphorylated form) with HDAC6; this interaction induces T cell proliferation arrest. Isoform 2 interacts (phosphorylated form) with 14-3-3 proteins; these interactions induces T cell proliferation arrest. Isoform 2 interacts with 14-3-3 proteins. Isoform 2 interacts (via phosphorylated form) with YWHAB; this interaction occurs in a chemokine-dependent manner and does not compete for binding of RIPOR2 with RHOA nor blocks inhibition of RIPOR2-mediated RHOA activity. Isoform 2 interacts with YWHAE. Isoform 2 interacts with YWHAQ. In terms of processing, phosphorylated. Isoform 2 is phosphorylated in T cells. Chemokine-induced phosphorylation of isoform 2 in neutrophils occurs in a PKC- and AKT-dependent manner, resulting in RIPOR2 interaction with YWHAB and stabilization. Isoform 2 is phosphorylated by PKCA, AKT1 and MAPKAPK1A; in vitro. Acetylated during myogenic differentiation. Expressed in primary fetal mononuclear myoblast. Expressed strongly in naive T lymphocytes. Expressed weakly in activated T lymphocytes (at protein level). Expressed in blood cells and adult tissues of hematopoietic origin, such as the secondary lymphoid organs. Expressed in cytotrophoblast.

The protein localises to the cytoplasm. It is found in the cytoskeleton. The protein resides in the cell projection. Its subcellular location is the filopodium. It localises to the stereocilium. The protein localises to the stereocilium membrane. It is found in the apical cell membrane. In terms of biological role, acts as an inhibitor of the small GTPase RHOA and plays several roles in the regulation of myoblast and hair cell differentiation, lymphocyte T proliferation and neutrophil polarization. Inhibits chemokine-induced T lymphocyte responses, such as cell adhesion, polarization and migration. Involved also in the regulation of neutrophil polarization, chemotaxis and adhesion. Required for normal development of inner and outer hair cell stereocilia within the cochlea of the inner ear. Plays a role for maintaining the structural organization of the basal domain of stereocilia. Involved in mechanosensory hair cell function. Required for normal hearing. Functionally, acts as an inhibitor of the small GTPase RHOA. Plays a role in fetal mononuclear myoblast differentiation by promoting filopodia and myotube formation. Maintains naive T lymphocytes in a quiescent state. The sequence is that of Rho family-interacting cell polarization regulator 2 (RIPOR2) from Homo sapiens (Human).